Reading from the N-terminus, the 926-residue chain is Serine/threonine-protein kinase/endoribonuclease IRE2 (926 aa).

The N-terminal stretch at 1 to 34 is a signal peptide; that stretch reads MASAVRGSRPWPRLGLQLQFAALLLGTLSPQVHT. Residues 35-430 are Lumenal-facing; the sequence is LRPENLLLVS…TPDSYLGLGP (396 aa). Residues 431–451 form a helical membrane-spanning segment; it reads QDLLAASLTAVLLGGWILFVM. Residues 452-926 lie on the Cytoplasmic side of the membrane; it reads RQQQPQVVEK…RRPCPGATGR (475 aa). Polar residues predominate over residues 478–501; that stretch reads DAQSLHSGASRRSQKRLQSPSKQA. Residues 478-509 form a disordered region; that stretch reads DAQSLHSGASRRSQKRLQSPSKQAQPLDDPEA. One can recognise a Protein kinase domain in the interval 520–781; sequence FNPKDVLGRG…APQVLAHPFF (262 aa). Residues 526-534 and lysine 548 contribute to the ATP site; that span reads LGRGAGGTF. Aspartate 637 acts as the Proton acceptor in catalysis. One can recognise a KEN domain in the interval 784–912; it reads RAKQLQFFQD…ESLFLPYYPP (129 aa).

Belongs to the protein kinase superfamily. Ser/Thr protein kinase family. Mg(2+) is required as a cofactor. Post-translationally, autophosphorylated.

It is found in the endoplasmic reticulum membrane. It catalyses the reaction L-seryl-[protein] + ATP = O-phospho-L-seryl-[protein] + ADP + H(+). The catalysed reaction is L-threonyl-[protein] + ATP = O-phospho-L-threonyl-[protein] + ADP + H(+). The kinase domain is activated by trans-autophosphorylation. Kinase activity is required for activation of the endoribonuclease domain. Its function is as follows. Induces translational repression through 28S ribosomal RNA cleavage in response to ER stress. Pro-apoptotic. Appears to play no role in the unfolded-protein response, unlike closely related proteins. This chain is Serine/threonine-protein kinase/endoribonuclease IRE2, found in Homo sapiens (Human).